The following is a 1287-amino-acid chain: DNA-directed RNA polymerase 147 kDa polypeptide (1287 aa).

It belongs to the poxviridae DNA-directed RNA polymerase 147 kDa subunit family. As to quaternary structure, the DNA-dependent RNA polymerase used for intermediate and late genes expression consists of eight subunits Rpo30/OPG66, Rpo7/OPG90, Rpo22/OPG103, Rpo147/OPG105, Rpo18/OPG119, Rpo19/OPG131, Rpo132/OPG151 and Rpo35/OPG156. The same holoenzyme, with the addition of the transcription-specificity factor OPG109, is used for early gene expression.

It localises to the virion. The enzyme catalyses RNA(n) + a ribonucleoside 5'-triphosphate = RNA(n+1) + diphosphate. Functionally, part of the DNA-dependent RNA polymerase which catalyzes the transcription of viral DNA into RNA using the four ribonucleoside triphosphates as substrates. Responsible for the transcription of early, intermediate and late genes. DNA-dependent RNA polymerase associates with the early transcription factor (ETF), itself composed of OPG118 and OPG133, thereby allowing the early genes transcription. Late transcription, and probably also intermediate transcription, require newly synthesized RNA polymerase. The sequence is that of DNA-directed RNA polymerase 147 kDa polypeptide (OPG105) from Fowlpox virus (strain NVSL) (FPV).